Reading from the N-terminus, the 510-residue chain is Probable inositol 3-phosphate synthase isozyme 3 (510 aa).

This sequence belongs to the myo-inositol 1-phosphate synthase family. NAD(+) is required as a cofactor. Expressed in siliques, leaves, roots, seed endosperm, but not in embryos. Highest expression in roots. Confined to vascular tissue and hydathodes of leaves.

The protein resides in the cytoplasm. The catalysed reaction is D-glucose 6-phosphate = 1D-myo-inositol 3-phosphate. The protein operates within polyol metabolism; myo-inositol biosynthesis; myo-inositol from D-glucose 6-phosphate: step 1/2. In terms of biological role, key enzyme in myo-inositol biosynthesis pathway that catalyzes the conversion of glucose 6-phosphate to 1-myo-inositol 1-phosphate in a NAD-dependent manner. The polypeptide is Probable inositol 3-phosphate synthase isozyme 3 (IPS3) (Arabidopsis thaliana (Mouse-ear cress)).